Reading from the N-terminus, the 122-residue chain is Large ribosomal subunit protein uL14 (122 aa).

It belongs to the universal ribosomal protein uL14 family. Part of the 50S ribosomal subunit. Forms a cluster with proteins L3 and L19. In the 70S ribosome, L14 and L19 interact and together make contacts with the 16S rRNA in bridges B5 and B8.

Functionally, binds to 23S rRNA. Forms part of two intersubunit bridges in the 70S ribosome. The sequence is that of Large ribosomal subunit protein uL14 from Chlamydia trachomatis serovar L2 (strain ATCC VR-902B / DSM 19102 / 434/Bu).